The following is a 1637-amino-acid chain: Serine/threonine-protein kinase Genghis Khan (1637 aa).

The region spanning 100-369 (FDILKIIGRG…IQDFMDHPWF (270 aa)) is the Protein kinase domain. Residues 106 to 114 (IGRGAFGEV) and Lys129 contribute to the ATP site. The active-site Proton acceptor is Asp224. The 71-residue stretch at 370–440 (VGIDWKNIRQ…SLTSSSTLDS (71 aa)) folds into the AGC-kinase C-terminal domain. Coiled-coil stretches lie at residues 473 to 587 (VDSV…EDAV), 643 to 688 (SEKL…LKYT), and 839 to 881 (DELS…DLQK). Positions 538–575 (RNQKQKLSRQVRDKEEELDGAMQKNDSLRNELRKSDKT) are disordered. Residues 563-575 (DSLRNELRKSDKT) show a composition bias toward basic and acidic residues. Thr895 is modified (phosphothreonine). A disordered region spans residues 952 to 971 (NNKDHSSMKEASVSDLSREE). Residues 989–1039 (IHQFLVRTFSSPTKCNHCTSLMVGLTRQGVVCEICGFACHTICCQKVPTTC) form a Phorbol-ester/DAG-type zinc finger. In terms of domain architecture, PH spans 1059 to 1177 (GTAYEGYVKV…WVIALGELHR (119 aa)). The 287-residue stretch at 1203 to 1489 (IRNALCSVII…LPLNNLGNVV (287 aa)) folds into the CNH domain. Residues 1546–1559 (ISAPTNFNHISHMG) enclose the CRIB domain. Ser1584 carries the post-translational modification Phosphoserine. The interval 1611–1637 (DYGNDNIISRTPSPMASSFMDGLSNND) is disordered. Polar residues predominate over residues 1616 to 1626 (NIISRTPSPMA).

Belongs to the protein kinase superfamily. AGC Ser/Thr protein kinase family. DMPK subfamily. In terms of assembly, interacts tightly with GTP-bound but not GDP-bound Cdc42.

It carries out the reaction L-seryl-[protein] + ATP = O-phospho-L-seryl-[protein] + ADP + H(+). The catalysed reaction is L-threonyl-[protein] + ATP = O-phospho-L-threonyl-[protein] + ADP + H(+). Functionally, acts as a downstream effector for the regulation of actin polymerization by Cdc42. This Drosophila melanogaster (Fruit fly) protein is Serine/threonine-protein kinase Genghis Khan (gek).